The sequence spans 419 residues: AT-rich binding protein (419 aa).

The C2H2-type 1 zinc finger occupies 29–52; the sequence is IVCHTCQEELQTQDAFWKHIQDEH. Residues 121–179 are disordered; sequence LHEAQHQQQQQQQQHQQQQQQQQHQQQQQHQHHQHQQQQQHLHQQQQQQQQQQRDAAKE. Composition is skewed to low complexity over residues 126 to 149 and 156 to 173; these read HQQQ…QQQQ and QQQQ…QQQQ. 2 C2H2-type zinc fingers span residues 352-376 and 382-405; these read YVCD…RVVH and FNCD…KKKH.

It is found in the nucleus. Functionally, may be a transcription factor for genes having (A+T) stretches in their promoter and/or enhancer regions. Binds to AT rich DNA. The sequence is that of AT-rich binding protein from Drosophila grimshawi (Hawaiian fruit fly).